A 273-amino-acid chain; its full sequence is Undecaprenyl-diphosphatase (273 aa).

The next 7 membrane-spanning stretches (helical) occupy residues 6 to 26 (SLLIAAILGVVEGLTEFLPVS), 45 to 65 (AKTFEVVIQLGSILAVVVMFW), 90 to 110 (LTLIHILLGMIPAVVLGLLFH), 116 to 136 (LFNPINVMYALVVGGLLLIAA), 190 to 210 (YAASEFSFLLAVPMMMGATAL), 222 to 242 (GDIPMFAVGFITAFVVALIAI), and 252 to 272 (ISFIPFAIYRFIVAAAVYVVF).

The protein belongs to the UppP family.

The protein localises to the cell inner membrane. The catalysed reaction is di-trans,octa-cis-undecaprenyl diphosphate + H2O = di-trans,octa-cis-undecaprenyl phosphate + phosphate + H(+). In terms of biological role, catalyzes the dephosphorylation of undecaprenyl diphosphate (UPP). Confers resistance to bacitracin. The polypeptide is Undecaprenyl-diphosphatase (Escherichia coli O127:H6 (strain E2348/69 / EPEC)).